The primary structure comprises 514 residues: tRNA-2-methylthio-N(6)-dimethylallyladenosine synthase (514 aa).

In terms of domain architecture, MTTase N-terminal spans 68-186 (RTFLIKTYGC…LPEILEEAYL (119 aa)). Cys-77, Cys-113, Cys-147, Cys-223, Cys-227, and Cys-230 together coordinate [4Fe-4S] cluster. Positions 209 to 439 (RDGHIKAWVN…NKKVGIYSQQ (231 aa)) constitute a Radical SAM core domain. A TRAM domain is found at 442–505 (SQYEGKIVTV…QYSLNGTFIQ (64 aa)).

It belongs to the methylthiotransferase family. MiaB subfamily. As to quaternary structure, monomer. [4Fe-4S] cluster serves as cofactor.

The protein resides in the cytoplasm. It carries out the reaction N(6)-dimethylallyladenosine(37) in tRNA + (sulfur carrier)-SH + AH2 + 2 S-adenosyl-L-methionine = 2-methylsulfanyl-N(6)-dimethylallyladenosine(37) in tRNA + (sulfur carrier)-H + 5'-deoxyadenosine + L-methionine + A + S-adenosyl-L-homocysteine + 2 H(+). Its function is as follows. Catalyzes the methylthiolation of N6-(dimethylallyl)adenosine (i(6)A), leading to the formation of 2-methylthio-N6-(dimethylallyl)adenosine (ms(2)i(6)A) at position 37 in tRNAs that read codons beginning with uridine. In Staphylococcus epidermidis (strain ATCC 35984 / DSM 28319 / BCRC 17069 / CCUG 31568 / BM 3577 / RP62A), this protein is tRNA-2-methylthio-N(6)-dimethylallyladenosine synthase.